The following is a 580-amino-acid chain: Arginine--tRNA ligase (580 aa).

A 'HIGH' region motif is present at residues 127–137 (PNTHKELHVGH).

It belongs to the class-I aminoacyl-tRNA synthetase family. Monomer.

Its subcellular location is the cytoplasm. It catalyses the reaction tRNA(Arg) + L-arginine + ATP = L-arginyl-tRNA(Arg) + AMP + diphosphate. This chain is Arginine--tRNA ligase, found in Bdellovibrio bacteriovorus (strain ATCC 15356 / DSM 50701 / NCIMB 9529 / HD100).